The chain runs to 645 residues: 1,4-alpha-glucan branching enzyme GlgB (645 aa).

Aspartate 309 serves as the catalytic Nucleophile. Glutamate 352 (proton donor) is an active-site residue. The interval 619–645 (VKTRKGSKKQDGSKTKVRSNVTSRGKR) is disordered. Positions 636–645 (RSNVTSRGKR) are enriched in polar residues.

It belongs to the glycosyl hydrolase 13 family. GlgB subfamily. In terms of assembly, monomer.

The enzyme catalyses Transfers a segment of a (1-&gt;4)-alpha-D-glucan chain to a primary hydroxy group in a similar glucan chain.. It participates in glycan biosynthesis; glycogen biosynthesis. Its function is as follows. Catalyzes the formation of the alpha-1,6-glucosidic linkages in glycogen by scission of a 1,4-alpha-linked oligosaccharide from growing alpha-1,4-glucan chains and the subsequent attachment of the oligosaccharide to the alpha-1,6 position. This is 1,4-alpha-glucan branching enzyme GlgB from Bacillus mycoides (strain KBAB4) (Bacillus weihenstephanensis).